The following is a 214-amino-acid chain: GTP-binding nuclear protein GSP1/Ran (214 aa).

A Small GTPase Ran-type domain is found at 4 to 168 (EVPTFKLVLV…LWLARKLAGN (165 aa)). GTP is bound at residue 15-22 (DGGTGKTT). Residues 34–42 (KKYIATIGV) are switch-I. GTP contacts are provided by residues glycine 65, 119–122 (NKVD), and 147–149 (SAK). The tract at residues 65–81 (GQEKFGGLRDGYYINAQ) is switch-II.

This sequence belongs to the small GTPase superfamily. Ran family. As to quaternary structure, found in a nuclear export complex with RanGTP, exportin and pre-miRNA.

The protein resides in the nucleus. In terms of biological role, GTP-binding protein involved in nucleocytoplasmic transport. Required for the import of protein into the nucleus and also for RNA export. Involved in chromatin condensation and control of cell cycle. The polypeptide is GTP-binding nuclear protein GSP1/Ran (GSP1) (Eremothecium gossypii (strain ATCC 10895 / CBS 109.51 / FGSC 9923 / NRRL Y-1056) (Yeast)).